The following is a 492-amino-acid chain: Serine incorporator 4 (492 aa).

10 helical membrane passes run 59 to 79 (YILL…KTVV), 113 to 133 (AVYR…VLLV), 148 to 168 (SFWS…FCIP), 179 to 199 (IGIC…TAFA), 219 to 239 (GVSL…VLLF), 254 to 274 (LLSL…APCI), 281 to 301 (SGLL…FSAL), 330 to 350 (IPDT…VLFA), 421 to 441 (GFHF…TNWF), and 464 to 484 (VASC…PLLA).

This sequence belongs to the TDE1 family.

Its subcellular location is the membrane. Its function is as follows. Incorporates a polar amino acid serine into membranes and facilitates the synthesis of two serine-derived lipids, phosphatidylserine and sphingolipids. The polypeptide is Serine incorporator 4 (Serinc4) (Mus musculus (Mouse)).